The sequence spans 261 residues: uncharacterized protein (261 aa).

6 residues coordinate a divalent metal cation: Asp43, His45, Asp75, Asn106, His197, and His199.

This sequence belongs to the metallophosphoesterase superfamily. It depends on a divalent metal cation as a cofactor.

This is an uncharacterized protein from Aquifex aeolicus (strain VF5).